Here is a 369-residue protein sequence, read N- to C-terminus: MALTLEELVKRFGGEIAGDAQCKVSGLAPLDQAGPQQLAFLANPKYLSQVETTRAGAVLIAPKDLEKLRAATDGQPAGPRMAGPLNFIVTPNPYAYFARVAQMFIDLATPPRAPGVHPSATIDPAAQVAASAVIGPHVTVEAGAVIEDGVQLDANVFIGRGTTIGAGSHLYPNASVYHGCKIGPRAIIHAGAVIGSDGFGFAPDFVGDGDARTGSWVKIPQVGGVTVGPDVEIGANTTIDRGAMADTVIDECVKIDNQVQIGHNCRIGAYTVIAGSAGIAGSTTIGRHCMIGGAAGIAGHVTLGDYVIITAKSGVSKSLPKAGIYTSAFPAVDHGEWNRSAALVRNLDKLRERIKALETALAAQGGTDA.

The active-site Proton acceptor is H263.

It belongs to the transferase hexapeptide repeat family. LpxD subfamily. In terms of assembly, homotrimer.

It catalyses the reaction a UDP-3-O-[(3R)-3-hydroxyacyl]-alpha-D-glucosamine + a (3R)-hydroxyacyl-[ACP] = a UDP-2-N,3-O-bis[(3R)-3-hydroxyacyl]-alpha-D-glucosamine + holo-[ACP] + H(+). It participates in bacterial outer membrane biogenesis; LPS lipid A biosynthesis. Functionally, catalyzes the N-acylation of UDP-3-O-acylglucosamine using 3-hydroxyacyl-ACP as the acyl donor. Is involved in the biosynthesis of lipid A, a phosphorylated glycolipid that anchors the lipopolysaccharide to the outer membrane of the cell. The chain is UDP-3-O-acylglucosamine N-acyltransferase from Burkholderia ambifaria (strain MC40-6).